Reading from the N-terminus, the 258-residue chain is Capsid protein (258 aa).

A Bipartite nuclear localization signal motif is present at residues 3-20 (KRPGDIIISTPGSKVRRR). Positions 41 to 55 (RKRAWMNRPMYRKPM) match the Nuclear localization signal motif. The segment at 69–86 (CEGPCKVQSFEQRDDVKH) is a zinc-finger region. The Nuclear export signal motif lies at 102 to 123 (LTHRVGKRFCIKSIYILGKIWM). The Bipartite nuclear localization signal signature appears at 202–249 (KRFYRLNHHVTYNHQEAGKYENHTENALLLYMACTHASNPVYATLKIR).

This sequence belongs to the geminiviridae capsid protein family. As to quaternary structure, homomultimer. Binds to single-stranded and double-stranded viral DNA. Interacts (via nuclear localization signals) with host importin alpha-1a.

The protein resides in the virion. It localises to the host nucleus. In terms of biological role, encapsidates the viral DNA into characteristic twinned ('geminate') particles. Binds the genomic viral ssDNA and shuttles it into and out of the cell nucleus. The CP of bipartite geminiviruses is not required for cell-to-cell or systemic movement. This is Capsid protein from Hewittia sublobata (Coralbush).